The chain runs to 131 residues: 23S rRNA-specific endonuclease VapC20 (131 aa).

One can recognise a PINc domain in the interval 2 to 125; that stretch reads IFVDTSFWAA…FDGDFSAAGF (124 aa). Aspartate 5 and aspartate 98 together coordinate Mg(2+).

The protein belongs to the PINc/VapC protein family. It depends on Mg(2+) as a cofactor.

Functionally, toxic component of a type II toxin-antitoxin (TA) system. An endoribonuclease that cleaves 23S rRNA in the sarcin-ricin loop (SRL). The SRL sequence is highly conserved and is implicated in GTP hydrolysis by EF-Tu and EF-G. Acts on purified ribosomes but not on isolated RNA. Its toxic effect is neutralized by coexpression with cognate antitoxin VapB20. This is 23S rRNA-specific endonuclease VapC20 (vapC20) from Mycobacterium tuberculosis (strain CDC 1551 / Oshkosh).